Here is a 425-residue protein sequence, read N- to C-terminus: Histidine--tRNA ligase (425 aa).

Belongs to the class-II aminoacyl-tRNA synthetase family. In terms of assembly, homodimer.

It localises to the cytoplasm. It catalyses the reaction tRNA(His) + L-histidine + ATP = L-histidyl-tRNA(His) + AMP + diphosphate + H(+). The protein is Histidine--tRNA ligase of Tolumonas auensis (strain DSM 9187 / NBRC 110442 / TA 4).